Here is a 363-residue protein sequence, read N- to C-terminus: Trichocyst matrix protein T4-B (363 aa).

The N-terminal stretch at 1–17 is a signal peptide; the sequence is MARSLTILAIVFAVATA. Residues 18-52 constitute a propeptide that is removed on maturation; it reads RVTKSESPKEILAQVNKDSFGNSILSVLQLQLATG. The stretch at 85–119 forms a coiled coil; it reads VAFEKIIADLEQEIAYHQTQIVALSNLRDSTTEAL. The propeptide occupies 190–221; the sequence is RFEKVQAKLMESKHALFKPLINALTQLASKVD. Positions 244–352 form a coiled coil; the sequence is ASLLATEERQ…EVLTQKLSAA (109 aa).

It belongs to the TMP family. Two components are produced by post-translational processing from the precursor peptide.

It localises to the trichocyst. Functionally, structural protein that crystallize inside the trichocyst matrix. This Paramecium tetraurelia protein is Trichocyst matrix protein T4-B (T4B).